The primary structure comprises 238 residues: Large ribosomal subunit protein uL2 (238 aa).

2 disordered regions span residues 1-34 and 197-238; these read MGKRLRQQRAGRGTPTYRSRAHIHPGPAKYPPLS and VDHP…RRKR. The span at 224-238 shows a compositional bias: basic residues; the sequence is KVGHIAARRTGRRKR.

Belongs to the universal ribosomal protein uL2 family. As to quaternary structure, part of the 50S ribosomal subunit. Forms a bridge to the 30S subunit in the 70S ribosome.

In terms of biological role, one of the primary rRNA binding proteins. Required for association of the 30S and 50S subunits to form the 70S ribosome, for tRNA binding and peptide bond formation. It has been suggested to have peptidyltransferase activity; this is somewhat controversial. Makes several contacts with the 16S rRNA in the 70S ribosome. The polypeptide is Large ribosomal subunit protein uL2 (Aeropyrum pernix (strain ATCC 700893 / DSM 11879 / JCM 9820 / NBRC 100138 / K1)).